The following is a 364-amino-acid chain: Uroporphyrinogen decarboxylase (364 aa).

Substrate is bound by residues 49–53 (RQAGR), Asp98, Tyr173, Ser228, and His341.

Belongs to the uroporphyrinogen decarboxylase family. As to quaternary structure, homodimer.

Its subcellular location is the cytoplasm. The catalysed reaction is uroporphyrinogen III + 4 H(+) = coproporphyrinogen III + 4 CO2. It functions in the pathway porphyrin-containing compound metabolism; protoporphyrin-IX biosynthesis; coproporphyrinogen-III from 5-aminolevulinate: step 4/4. Its function is as follows. Catalyzes the decarboxylation of four acetate groups of uroporphyrinogen-III to yield coproporphyrinogen-III. The sequence is that of Uroporphyrinogen decarboxylase from Protochlamydia amoebophila (strain UWE25).